The sequence spans 1112 residues: DNA-directed RNA polymerase subunit beta (1112 aa).

The segment at 1087–1112 (VGGRRTPNRPTYENIGGPREMEFSED) is disordered.

It belongs to the RNA polymerase beta chain family. In terms of assembly, in cyanobacteria the RNAP catalytic core is composed of 2 alpha, 1 beta, 1 beta', 1 gamma and 1 omega subunit. When a sigma factor is associated with the core the holoenzyme is formed, which can initiate transcription.

It carries out the reaction RNA(n) + a ribonucleoside 5'-triphosphate = RNA(n+1) + diphosphate. DNA-dependent RNA polymerase catalyzes the transcription of DNA into RNA using the four ribonucleoside triphosphates as substrates. The polypeptide is DNA-directed RNA polymerase subunit beta (Gloeobacter violaceus (strain ATCC 29082 / PCC 7421)).